Here is a 97-residue protein sequence, read N- to C-terminus: Co-chaperonin GroES (97 aa).

This sequence belongs to the GroES chaperonin family. In terms of assembly, heptamer of 7 subunits arranged in a ring. Interacts with the chaperonin GroEL.

It localises to the cytoplasm. In terms of biological role, together with the chaperonin GroEL, plays an essential role in assisting protein folding. The GroEL-GroES system forms a nano-cage that allows encapsulation of the non-native substrate proteins and provides a physical environment optimized to promote and accelerate protein folding. GroES binds to the apical surface of the GroEL ring, thereby capping the opening of the GroEL channel. In Buchnera aphidicola subsp. Geoica urticularia, this protein is Co-chaperonin GroES.